Consider the following 223-residue polypeptide: MIFAANLKCNHTRASFKIYAKILNKTMGVKCDDIIVFPPSIAFLENENNFIQGAQNFYPCVNGAFTGELGKEHLDEFGIKCVLIGHSERRALGDEEFIKAKFDFAKEHGYKIVFCIGENLDTKNSGKTLEFLKKQLEIIDLNYEKLIIAYEPIYSIGTGVSAQSTDIAKVLEFLASLTKVPLLYGGSVNENNIKEILSVNHCGGVLIGSAALKVENFIKLIKG.

6–8 is a substrate binding site; that stretch reads NLK. His86 functions as the Electrophile in the catalytic mechanism. Glu151 (proton acceptor) is an active-site residue. 2 residues coordinate substrate: Gly157 and Ser187.

It belongs to the triosephosphate isomerase family. In terms of assembly, homodimer.

Its subcellular location is the cytoplasm. It carries out the reaction D-glyceraldehyde 3-phosphate = dihydroxyacetone phosphate. It functions in the pathway carbohydrate biosynthesis; gluconeogenesis. The protein operates within carbohydrate degradation; glycolysis; D-glyceraldehyde 3-phosphate from glycerone phosphate: step 1/1. Involved in the gluconeogenesis. Catalyzes stereospecifically the conversion of dihydroxyacetone phosphate (DHAP) to D-glyceraldehyde-3-phosphate (G3P). This is Triosephosphate isomerase from Campylobacter jejuni subsp. jejuni serotype O:2 (strain ATCC 700819 / NCTC 11168).